Reading from the N-terminus, the 431-residue chain is 23S rRNA (uracil(1939)-C(5))-methyltransferase RlmD (431 aa).

The region spanning 10 to 68 (RVTTRQIITVKVNDLDSFGQGVARHNGKALFIPGLLPEESAEVIITEDKKQFARARVSR) is the TRAM domain. [4Fe-4S] cluster is bound by residues Cys-81, Cys-87, Cys-90, and Cys-161. The S-adenosyl-L-methionine site is built by Gln-264, Phe-293, Asn-298, Glu-314, Asn-341, and Asp-362. The active-site Nucleophile is the Cys-388.

Belongs to the class I-like SAM-binding methyltransferase superfamily. RNA M5U methyltransferase family. RlmD subfamily.

The catalysed reaction is uridine(1939) in 23S rRNA + S-adenosyl-L-methionine = 5-methyluridine(1939) in 23S rRNA + S-adenosyl-L-homocysteine + H(+). Functionally, catalyzes the formation of 5-methyl-uridine at position 1939 (m5U1939) in 23S rRNA. The sequence is that of 23S rRNA (uracil(1939)-C(5))-methyltransferase RlmD from Salmonella typhi.